Here is a 177-residue protein sequence, read N- to C-terminus: Large ribosomal subunit protein uL10 (177 aa).

This sequence belongs to the universal ribosomal protein uL10 family. As to quaternary structure, part of the ribosomal stalk of the 50S ribosomal subunit. The N-terminus interacts with L11 and the large rRNA to form the base of the stalk. The C-terminus forms an elongated spine to which L12 dimers bind in a sequential fashion forming a multimeric L10(L12)X complex.

Functionally, forms part of the ribosomal stalk, playing a central role in the interaction of the ribosome with GTP-bound translation factors. The polypeptide is Large ribosomal subunit protein uL10 (Xanthomonas campestris pv. campestris (strain 8004)).